The chain runs to 928 residues: Isoleucine--tRNA ligase (928 aa).

Residues 57 to 67 (PFANGNIHMGH) carry the 'HIGH' region motif. Glutamate 552 serves as a coordination point for L-isoleucyl-5'-AMP. The 'KMSKS' region signature appears at 593 to 597 (KMSKS). Lysine 596 is an ATP binding site. Residues cysteine 887, cysteine 890, cysteine 907, and cysteine 910 each contribute to the Zn(2+) site.

It belongs to the class-I aminoacyl-tRNA synthetase family. IleS type 1 subfamily. Monomer. Zn(2+) serves as cofactor.

Its subcellular location is the cytoplasm. The catalysed reaction is tRNA(Ile) + L-isoleucine + ATP = L-isoleucyl-tRNA(Ile) + AMP + diphosphate. Functionally, catalyzes the attachment of isoleucine to tRNA(Ile). As IleRS can inadvertently accommodate and process structurally similar amino acids such as valine, to avoid such errors it has two additional distinct tRNA(Ile)-dependent editing activities. One activity is designated as 'pretransfer' editing and involves the hydrolysis of activated Val-AMP. The other activity is designated 'posttransfer' editing and involves deacylation of mischarged Val-tRNA(Ile). This Lacticaseibacillus casei (strain BL23) (Lactobacillus casei) protein is Isoleucine--tRNA ligase.